A 307-amino-acid chain; its full sequence is Methionyl-tRNA formyltransferase (307 aa).

Residue 108-111 (SLLP) participates in (6S)-5,6,7,8-tetrahydrofolate binding.

This sequence belongs to the Fmt family.

The enzyme catalyses L-methionyl-tRNA(fMet) + (6R)-10-formyltetrahydrofolate = N-formyl-L-methionyl-tRNA(fMet) + (6S)-5,6,7,8-tetrahydrofolate + H(+). Its function is as follows. Attaches a formyl group to the free amino group of methionyl-tRNA(fMet). The formyl group appears to play a dual role in the initiator identity of N-formylmethionyl-tRNA by promoting its recognition by IF2 and preventing the misappropriation of this tRNA by the elongation apparatus. The chain is Methionyl-tRNA formyltransferase from Xylella fastidiosa (strain 9a5c).